A 283-amino-acid chain; its full sequence is Digeranylgeranylglyceryl phosphate synthase (283 aa).

8 consecutive transmembrane segments (helical) span residues 5–27 (VEII…AILA), 37–57 (AMLA…YFDY), 85–105 (LLFI…DTWI), 128–148 (PLIG…FAGY), 152–172 (EGLI…MTTA), 203–223 (AIIA…LYIY), 228–248 (INYL…AVLL), and 263–283 (LKTG…TITF).

The protein belongs to the UbiA prenyltransferase family. DGGGP synthase subfamily. Requires Mg(2+) as cofactor.

Its subcellular location is the cell membrane. It carries out the reaction sn-3-O-(geranylgeranyl)glycerol 1-phosphate + (2E,6E,10E)-geranylgeranyl diphosphate = 2,3-bis-O-(geranylgeranyl)-sn-glycerol 1-phosphate + diphosphate. It functions in the pathway membrane lipid metabolism; glycerophospholipid metabolism. Prenyltransferase that catalyzes the transfer of the geranylgeranyl moiety of geranylgeranyl diphosphate (GGPP) to the C2 hydroxyl of (S)-3-O-geranylgeranylglyceryl phosphate (GGGP). This reaction is the second ether-bond-formation step in the biosynthesis of archaeal membrane lipids. The chain is Digeranylgeranylglyceryl phosphate synthase from Methanobrevibacter smithii (strain ATCC 35061 / DSM 861 / OCM 144 / PS).